We begin with the raw amino-acid sequence, 77 residues long: Secapin (77 aa).

The signal sequence occupies residues 1 to 32; sequence MKNYSKNATYLITVLLFSFVAMLLIIPSKCEA. A propeptide spanning residues 33–52 is cleaved from the precursor; sequence VSNDMQPLEARTADLVQQPR. The cysteines at positions 61 and 72 are disulfide-linked.

Belongs to the secapin family. As to expression, expressed by the venom gland.

Its subcellular location is the secreted. In terms of biological role, nontoxic peptide. The protein is Secapin of Apis cerana cerana (Oriental honeybee).